The following is a 373-amino-acid chain: Peptide chain release factor 1-like, mitochondrial (373 aa).

The transit peptide at 1–13 directs the protein to the mitochondrion; that stretch reads MRSGFLRSARRLW. Residues 56–111 adopt a coiled-coil conformation; sequence QLAAAARLLNEKERELRDTESLLHDENEDLKKLAESEIALCQKEIAELKHRIISLL. A GGQ domain region spans residues 229–293; it reads PKDLRIDTKR…LRARLYSMRL (65 aa). A GGQ motif is present at residues 243-245; the sequence is GGQ. Q245 is subject to N5-methylglutamine.

It belongs to the prokaryotic/mitochondrial release factor family. In terms of processing, methylation of glutamine in the GGQ triplet by HEMK1 is conserved from bacteria to mammals.

It localises to the mitochondrion. In terms of biological role, mitochondrial peptide chain release factor that directs the termination of translation in response to the peptide chain termination codons UAA and UAG. This chain is Peptide chain release factor 1-like, mitochondrial (Mtrf1l), found in Rattus norvegicus (Rat).